Consider the following 299-residue polypeptide: Cycloserine biosynthesis protein DcsG (299 aa).

The ATP site is built by lysine 92, lysine 137, serine 144, glutamine 175, proline 176, and valine 178. The region spanning 95–298 (LADLAAHGVP…FAQALAERLK (204 aa)) is the ATP-grasp domain. Residues arginine 220 and arginine 254 contribute to the active site. Glutamate 269 and glutamate 271 together coordinate Mg(2+). The active site involves glutamate 271.

In terms of assembly, monomer. Requires Mg(2+) as cofactor.

The enzyme catalyses O-ureido-D-serine + ATP + H2O + H(+) = D-cycloserine + NH4(+) + ADP + phosphate + CO2. Functionally, involved in the biosynthesis of the antibiotic D-cycloserine (DCS), a cyclic structural analog of D-alanine, used as an antitubercular agent. Catalyzes the synthesis of D-cycloserine from O-ureido-D-serine (D-OUS). It reacts with D-OUS, D-homocysteine and beta-aminooxy-D-alanine. The sequence is that of Cycloserine biosynthesis protein DcsG from Streptomyces lavendulae.